The primary structure comprises 184 residues: Threonylcarbamoyl-AMP synthase (184 aa).

The YrdC-like domain occupies 1–184 (MNNLENIVEQ…IFTQHIFRQG (184 aa)).

The protein belongs to the SUA5 family. TsaC subfamily.

It localises to the cytoplasm. It carries out the reaction L-threonine + hydrogencarbonate + ATP = L-threonylcarbamoyladenylate + diphosphate + H2O. Required for the formation of a threonylcarbamoyl group on adenosine at position 37 (t(6)A37) in tRNAs that read codons beginning with adenine. Catalyzes the conversion of L-threonine, HCO(3)(-)/CO(2) and ATP to give threonylcarbamoyl-AMP (TC-AMP) as the acyladenylate intermediate, with the release of diphosphate. The sequence is that of Threonylcarbamoyl-AMP synthase from Actinobacillus pleuropneumoniae serotype 5b (strain L20).